The following is a 759-amino-acid chain: uncharacterized protein (759 aa).

Positions 352–556 (VIQKLSDYAF…KDEDIADFSI (205 aa)) constitute an MCM domain. 397-404 (SDPGVGKS) provides a ligand contact to ATP.

This sequence belongs to the MCM family.

This is an uncharacterized protein from Methanocaldococcus jannaschii (strain ATCC 43067 / DSM 2661 / JAL-1 / JCM 10045 / NBRC 100440) (Methanococcus jannaschii).